The sequence spans 280 residues: Protoheme IX farnesyltransferase 2 (280 aa).

9 helical membrane-spanning segments follow: residues 12-32 (VIWL…GGVD), 35-55 (LFSL…FNHY), 76-96 (LITP…GISL), 98-118 (FLLL…FYAV), 129-149 (WLNI…GYAL), 158-178 (AVLI…ALAF), 199-221 (ERAV…WLYL), 226-248 (GAGG…YAAV), and 255-275 (MWKM…ALMI).

This sequence belongs to the UbiA prenyltransferase family. Protoheme IX farnesyltransferase subfamily.

It is found in the cell membrane. The enzyme catalyses heme b + (2E,6E)-farnesyl diphosphate + H2O = Fe(II)-heme o + diphosphate. It functions in the pathway porphyrin-containing compound metabolism; heme O biosynthesis; heme O from protoheme: step 1/1. Its function is as follows. Converts heme B (protoheme IX) to heme O by substitution of the vinyl group on carbon 2 of heme B porphyrin ring with a hydroxyethyl farnesyl side group. This is Protoheme IX farnesyltransferase 2 from Pyrobaculum aerophilum (strain ATCC 51768 / DSM 7523 / JCM 9630 / CIP 104966 / NBRC 100827 / IM2).